A 332-amino-acid chain; its full sequence is Glycerol-3-phosphate dehydrogenase [NAD(P)+] (332 aa).

Positions 13, 33, and 107 each coordinate NADPH. Residues lysine 107, glycine 136, and serine 138 each coordinate sn-glycerol 3-phosphate. Alanine 140 contributes to the NADPH binding site. Positions 191, 244, 254, 255, and 256 each coordinate sn-glycerol 3-phosphate. Catalysis depends on lysine 191, which acts as the Proton acceptor. Position 255 (arginine 255) interacts with NADPH. Residue glutamate 280 coordinates NADPH.

This sequence belongs to the NAD-dependent glycerol-3-phosphate dehydrogenase family.

The protein resides in the cytoplasm. It carries out the reaction sn-glycerol 3-phosphate + NAD(+) = dihydroxyacetone phosphate + NADH + H(+). The enzyme catalyses sn-glycerol 3-phosphate + NADP(+) = dihydroxyacetone phosphate + NADPH + H(+). The protein operates within membrane lipid metabolism; glycerophospholipid metabolism. Functionally, catalyzes the reduction of the glycolytic intermediate dihydroxyacetone phosphate (DHAP) to sn-glycerol 3-phosphate (G3P), the key precursor for phospholipid synthesis. The polypeptide is Glycerol-3-phosphate dehydrogenase [NAD(P)+] (Alkalilimnicola ehrlichii (strain ATCC BAA-1101 / DSM 17681 / MLHE-1)).